Reading from the N-terminus, the 519-residue chain is Alternative NAD(P)H-ubiquinone oxidoreductase C1, chloroplastic/mitochondrial (519 aa).

The N-terminal 52 residues, 1-52 (MAVLSSVSSLIPFSYGATRLTSKASLASRTSGFNLSSRWNSTRNSPMLYLSR), are a transit peptide targeting the chloroplast and mitochondrion. 82–118 (RVCILGGGFGGLYTALRLESLVWPEDKKPQVVLVDQS) lines the FAD pocket. 246–282 (IKVAVVGCGYAGVELAATISERLQDRGIVQSINVSKN) is an NAD(+) binding site.

This sequence belongs to the NADH dehydrogenase family. The cofactor is FAD. As to expression, flowers, roots, leaves and stems.

It localises to the mitochondrion. Its subcellular location is the mitochondrion inner membrane. The protein localises to the plastid. It is found in the chloroplast. The protein resides in the plastoglobule. The enzyme catalyses a quinone + NADH + H(+) = a quinol + NAD(+). It catalyses the reaction a ubiquinone + NADH + H(+) = a ubiquinol + NAD(+). The catalysed reaction is demethylphylloquinone + NADPH + H(+) = demethylphylloquinol + NADP(+). With respect to regulation, inhibited by dicumarol. Its function is as follows. Bifunctional oxidoreductase ables to act both on prenyl naphthoquinones and on prenyl benzoquinones. May serve a respiratory function. Involved in an electron flow toward the plastoglobule plastoquinone pool. Required for plastochromanol-8 accumulation and for phylloquinone (vitamin K1) production. Probably not directly involved in cyclic or chlororespiratory electron flows under standard growth conditions, but participates in the redox metabolism of plastoquinone-9 and the tocophrol recycling-intermediate alpha-tocopherol quinone. Catalyzes the penultimate step in the biosynthesis of vitamin K1. The chain is Alternative NAD(P)H-ubiquinone oxidoreductase C1, chloroplastic/mitochondrial from Arabidopsis thaliana (Mouse-ear cress).